The following is a 395-amino-acid chain: Digeranylgeranylglycerophospholipid reductase (395 aa).

A15, D34, C45, A46, A48, R97, A121, D276, and G288 together coordinate FAD. Position 329 (R329) interacts with a 2,3-bis-O-(geranylgeranyl)-sn-glycerol 1-phospholipid.

It belongs to the geranylgeranyl reductase family. DGGGPL reductase subfamily. Requires FAD as cofactor.

The catalysed reaction is a 2,3-bis-O-phytanyl-sn-glycerol 1-phospholipid + 8 A = a 2,3-bis-O-(geranylgeranyl)-sn-glycerol 1-phospholipid + 8 AH2. The enzyme catalyses 2,3-bis-O-(phytanyl)-sn-glycerol 1-phosphate + 8 A = 2,3-bis-O-(geranylgeranyl)-sn-glycerol 1-phosphate + 8 AH2. It catalyses the reaction CDP-2,3-bis-O-(geranylgeranyl)-sn-glycerol + 8 AH2 = CDP-2,3-bis-O-(phytanyl)-sn-glycerol + 8 A. It carries out the reaction archaetidylserine + 8 AH2 = 2,3-bis-O-phytanyl-sn-glycero-3-phospho-L-serine + 8 A. It participates in membrane lipid metabolism; glycerophospholipid metabolism. Functionally, is involved in the reduction of 2,3-digeranylgeranylglycerophospholipids (unsaturated archaeols) into 2,3-diphytanylglycerophospholipids (saturated archaeols) in the biosynthesis of archaeal membrane lipids. Catalyzes the formation of archaetidic acid (2,3-di-O-phytanyl-sn-glyceryl phosphate) from 2,3-di-O-geranylgeranylglyceryl phosphate (DGGGP) via the hydrogenation of each double bond of the isoprenoid chains. Is also probably able to reduce double bonds of geranyl groups in CDP-2,3-bis-O-(geranylgeranyl)-sn-glycerol and archaetidylserine, thus acting at various stages in the biosynthesis of archaeal membrane lipids. This Thermococcus kodakarensis (strain ATCC BAA-918 / JCM 12380 / KOD1) (Pyrococcus kodakaraensis (strain KOD1)) protein is Digeranylgeranylglycerophospholipid reductase.